A 111-amino-acid polypeptide reads, in one-letter code: uncharacterized protein (111 aa).

4 consecutive transmembrane segments (helical) span residues 4–21 (FITA…FVSF), 28–47 (LVYF…YMIY), 51–73 (TGIR…VTAF), and 80–102 (SFFF…YLGM).

The protein localises to the cell membrane. This is an uncharacterized protein from Bacillus subtilis (strain 168).